Here is a 147-residue protein sequence, read N- to C-terminus: Cyanate hydratase (147 aa).

Catalysis depends on residues Arg-88, Glu-91, and Ser-114.

It belongs to the cyanase family.

The catalysed reaction is cyanate + hydrogencarbonate + 3 H(+) = NH4(+) + 2 CO2. Catalyzes the reaction of cyanate with bicarbonate to produce ammonia and carbon dioxide. The sequence is that of Cyanate hydratase from Parasynechococcus marenigrum (strain WH8102).